Consider the following 202-residue polypeptide: NADH:(hydroxy)cinnamate reductase subunit CrdA (202 aa).

Belongs to the NADH-dependent flavin reductase family. NADH:(hydroxy)cinnamate reductase Crd is a heterodimer composed of CrdA and CrdB subunits, encoded by adjacent genes. It depends on FMN as a cofactor.

Its function is as follows. Component of the NADH:(hydroxy)cinnamate reductase. CrdA is probably reduced by NADH and then transfers the electrons to the catalytic center of CrdB. Is likely involved in protecting V.ruber from (hydroxy)cinnamate poisoning. This chain is NADH:(hydroxy)cinnamate reductase subunit CrdA, found in Vibrio ruber (strain DSM 16370 / JCM 11486 / BCRC 17186 / CECT 7878 / LMG 23124 / VR1).